Reading from the N-terminus, the 130-residue chain is DUF35 domain-containing scaffold protein (130 aa).

Cys20, Cys23, Cys34, and Cys37 together coordinate Zn(2+).

The protein belongs to the scaffold protein DUF35 family. In terms of assembly, interacts with acetoacetyl-CoA thiolase and HMG-CoA synthase (HMGCS) that catalyzes the first and second step in the mevalonate pathway, respectively.

Its function is as follows. Functions as a scaffold to connect the acetoacetyl-CoA thiolase and HMG-CoA synthase (HMGCS) dimers in the channeling thiolase/HMGCS complex, which allows for efficient coupling of the endergonic thiolase reaction with the exergonic HMGCS reaction. The chain is DUF35 domain-containing scaffold protein from Methanothermococcus thermolithotrophicus (Methanococcus thermolithotrophicus).